We begin with the raw amino-acid sequence, 91 residues long: Large ribosomal subunit protein eL31 (91 aa).

The protein belongs to the eukaryotic ribosomal protein eL31 family.

This Pyrobaculum calidifontis (strain DSM 21063 / JCM 11548 / VA1) protein is Large ribosomal subunit protein eL31.